A 118-amino-acid chain; its full sequence is Small ribosomal subunit protein uS13 (118 aa).

Residues 94–118 (GLPVRGQRTQTNARTRKGPRRLARK) are disordered. The span at 107 to 118 (RTRKGPRRLARK) shows a compositional bias: basic residues.

It belongs to the universal ribosomal protein uS13 family. As to quaternary structure, part of the 30S ribosomal subunit. Forms a loose heterodimer with protein S19. Forms two bridges to the 50S subunit in the 70S ribosome.

Functionally, located at the top of the head of the 30S subunit, it contacts several helices of the 16S rRNA. In the 70S ribosome it contacts the 23S rRNA (bridge B1a) and protein L5 of the 50S subunit (bridge B1b), connecting the 2 subunits; these bridges are implicated in subunit movement. Contacts the tRNAs in the A and P-sites. In Nitrosococcus oceani (strain ATCC 19707 / BCRC 17464 / JCM 30415 / NCIMB 11848 / C-107), this protein is Small ribosomal subunit protein uS13.